The chain runs to 631 residues: tRNA uridine 5-carboxymethylaminomethyl modification enzyme MnmG (631 aa).

Residues 13–18 (GGGHAG), Val-125, and Ser-180 each bind FAD. 273 to 287 (GPRYCPSIEDKVMRF) serves as a coordination point for NAD(+). An FAD-binding site is contributed by Gln-370.

Belongs to the MnmG family. Homodimer. Heterotetramer of two MnmE and two MnmG subunits. It depends on FAD as a cofactor.

Its subcellular location is the cytoplasm. In terms of biological role, NAD-binding protein involved in the addition of a carboxymethylaminomethyl (cmnm) group at the wobble position (U34) of certain tRNAs, forming tRNA-cmnm(5)s(2)U34. The sequence is that of tRNA uridine 5-carboxymethylaminomethyl modification enzyme MnmG from Vibrio cholerae serotype O1 (strain ATCC 39541 / Classical Ogawa 395 / O395).